The following is a 258-amino-acid chain: UPF0246 protein YaaA (258 aa).

This sequence belongs to the UPF0246 family.

The polypeptide is UPF0246 protein YaaA (Escherichia coli O127:H6 (strain E2348/69 / EPEC)).